Here is a 400-residue protein sequence, read N- to C-terminus: MKEKTIIIVGGGQAAAMAAASLRQQGFTGELHLFSDEQHLPYERPPLSKSMLLEDSPQLQSVLPAHWWQENNVHLHSGVTIKTLGRDTRELVLANGESWHWDQLFIATGAAARPLPLLDALGERCFTLRHAGDAARLREVLQPERSVVIVGAGTIGLELAASATQRRCKVTVIELAATVMGRNAPPPVQRYLLQRHQQAGVRILLNNAIEHVVDGEKVELTLQSGETLQADVVIYGIGISANDQLAREANLDTTNGIVIDEACRTCDPAIFAGGDVAITRLDNGALHRCESWENANNHAQIAAAAMLGLPLPLLPPPWFWSDQYSDNLQFIGDMRGDDWLCRGNPETQKAIWFNLQNGVLIGAVTLNQGREIRSIRKWIQSGKTFDAKQLTDENIALKSL.

5–36 contacts FAD; the sequence is TIIIVGGGQAAAMAAASLRQQGFTGELHLFSD. 146–174 provides a ligand contact to NAD(+); the sequence is SVVIVGAGTIGLELAASATQRRCKVTVIE.

The protein belongs to the bacterial ring-hydroxylating dioxygenase ferredoxin reductase family. In terms of assembly, this dioxygenase system consists of four proteins: the two subunits of the hydroxylase component (HcaE and HcaF), a ferredoxin (HcaC) and a ferredoxin reductase (HcaD). Requires FAD as cofactor.

The enzyme catalyses 2 reduced [2Fe-2S]-[ferredoxin] + NAD(+) + H(+) = 2 oxidized [2Fe-2S]-[ferredoxin] + NADH. It functions in the pathway aromatic compound metabolism; 3-phenylpropanoate degradation. Its function is as follows. Part of the multicomponent 3-phenylpropionate dioxygenase, that converts 3-phenylpropionic acid (PP) and cinnamic acid (CI) into 3-phenylpropionate-dihydrodiol (PP-dihydrodiol) and cinnamic acid-dihydrodiol (CI-dihydrodiol), respectively. In Escherichia coli O157:H7, this protein is 3-phenylpropionate/cinnamic acid dioxygenase ferredoxin--NAD(+) reductase component.